A 198-amino-acid chain; its full sequence is Holliday junction resolvase RecU (198 aa).

Residues methionine 1–asparagine 22 form a disordered region. The segment covering glutamine 11–asparagine 22 has biased composition (polar residues). The Mg(2+) site is built by threonine 81, aspartate 83, glutamate 96, and glutamine 115.

It belongs to the RecU family. The cofactor is Mg(2+).

The protein localises to the cytoplasm. It catalyses the reaction Endonucleolytic cleavage at a junction such as a reciprocal single-stranded crossover between two homologous DNA duplexes (Holliday junction).. In terms of biological role, endonuclease that resolves Holliday junction intermediates in genetic recombination. Cleaves mobile four-strand junctions by introducing symmetrical nicks in paired strands. Promotes annealing of linear ssDNA with homologous dsDNA. Required for DNA repair, homologous recombination and chromosome segregation. The sequence is that of Holliday junction resolvase RecU from Streptococcus pneumoniae (strain Hungary19A-6).